The primary structure comprises 238 residues: Single-stranded DNA-binding protein WHY2, mitochondrial (238 aa).

Residues 1-29 (MMKQARSLLSRSLCDQSKSLFEASTLRGF) constitute a mitochondrion transit peptide. The segment at 62-67 (KGKAAL) is required for ssDNA binding.

It belongs to the Whirly family. In terms of assembly, homotetramer.

Its subcellular location is the mitochondrion. Its function is as follows. Single-stranded DNA-binding protein that associates with mitochondrial DNA and may play a role in the regulation of the gene expression machinery. Also seems to be required to prevent break-induced DNA rearrangements in the mitochondrial genome. Can bind to melt double-stranded DNA in vivo. The chain is Single-stranded DNA-binding protein WHY2, mitochondrial (WHY2) from Arabidopsis thaliana (Mouse-ear cress).